The following is a 341-amino-acid chain: UDP-3-O-(3-hydroxymyristoyl)glucosamine N-acyltransferase (341 aa).

His239 (proton acceptor) is an active-site residue.

Belongs to the transferase hexapeptide repeat family. LpxD subfamily. As to quaternary structure, homotrimer.

It catalyses the reaction a UDP-3-O-[(3R)-3-hydroxyacyl]-alpha-D-glucosamine + a (3R)-hydroxyacyl-[ACP] = a UDP-2-N,3-O-bis[(3R)-3-hydroxyacyl]-alpha-D-glucosamine + holo-[ACP] + H(+). It carries out the reaction UDP-3-O-[(3R)-3-hydroxytetradecanoyl]-alpha-D-glucosamine + (3R)-hydroxytetradecanoyl-[ACP] = UDP-2-N,3-O-bis[(3R)-3-hydroxytetradecanoyl]-alpha-D-glucosamine + holo-[ACP] + H(+). It participates in glycolipid biosynthesis; lipid IV(A) biosynthesis; lipid IV(A) from (3R)-3-hydroxytetradecanoyl-[acyl-carrier-protein] and UDP-N-acetyl-alpha-D-glucosamine: step 3/6. Catalyzes the N-acylation of UDP-3-O-(hydroxytetradecanoyl)glucosamine using 3-hydroxytetradecanoyl-ACP as the acyl donor. Is involved in the biosynthesis of lipid A, a phosphorylated glycolipid that anchors the lipopolysaccharide to the outer membrane of the cell. This is UDP-3-O-(3-hydroxymyristoyl)glucosamine N-acyltransferase from Salmonella choleraesuis (strain SC-B67).